The following is a 227-amino-acid chain: Protein rapunzel (227 aa).

The helical transmembrane segment at 179 to 196 threads the bilayer; the sequence is LAYLFCIGFIALMGYYGI.

It is found in the membrane. The chain is Protein rapunzel from Danio rerio (Zebrafish).